Here is a 307-residue protein sequence, read N- to C-terminus: MTRLAVSLPGLNLKNPIMPASGCFGFGAEYAEYYDLSVLGSIMVKATTLEPRRGNPVIRVAETPGGMLNAIGLQNPGLDVVMAEKLPWLAEHFPDLPIIANVAGYTTEDYVRVCEVISTAPNVAAVEINISCPNVKRGGITFGTNVTAAHDLTQAVVAAASVPVYVKLSPNVTDITEIARATADAGADGLTLINTLTGMRINLARRTPVIANATGGLSGPAVLPIAVRMIDAVTRVVDIPVIGMGGVMTSADALELMMAGASAVGVGTANFTDPLACPKIINGLEPLMDDLSIASLEDLRTQVRQSR.

FMN contacts are provided by residues S21 and 45–46 (KA). Residues K45 and 69 to 73 (NAIGL) contribute to the substrate site. N101 and N129 together coordinate FMN. Position 129 (N129) interacts with substrate. C132 functions as the Nucleophile in the catalytic mechanism. K167 and I193 together coordinate FMN. Position 194–195 (194–195 (NT)) interacts with substrate. FMN contacts are provided by residues G219, 245-246 (GG), and 267-268 (GT).

This sequence belongs to the dihydroorotate dehydrogenase family. Type 1 subfamily. Heterotetramer of 2 PyrK and 2 PyrD type B subunits. FMN serves as cofactor.

It localises to the cytoplasm. The catalysed reaction is (S)-dihydroorotate + NAD(+) = orotate + NADH + H(+). It functions in the pathway pyrimidine metabolism; UMP biosynthesis via de novo pathway; orotate from (S)-dihydroorotate (NAD(+) route): step 1/1. Its function is as follows. Catalyzes the conversion of dihydroorotate to orotate with NAD(+) as electron acceptor. The chain is Dihydroorotate dehydrogenase B (NAD(+)), catalytic subunit (pyrD) from Cutibacterium acnes (strain DSM 16379 / KPA171202) (Propionibacterium acnes).